The chain runs to 219 residues: Thiamine-phosphate synthase (219 aa).

4-amino-2-methyl-5-(diphosphooxymethyl)pyrimidine-binding positions include 48 to 52 (QFRQK) and Asn-84. Mg(2+) contacts are provided by Asp-85 and Asp-104. Ser-123 serves as a coordination point for 4-amino-2-methyl-5-(diphosphooxymethyl)pyrimidine. 150 to 152 (TPS) contributes to the 2-[(2R,5Z)-2-carboxy-4-methylthiazol-5(2H)-ylidene]ethyl phosphate binding site. Lys-153 contacts 4-amino-2-methyl-5-(diphosphooxymethyl)pyrimidine. Residues Gly-181 and 199 to 200 (IS) contribute to the 2-[(2R,5Z)-2-carboxy-4-methylthiazol-5(2H)-ylidene]ethyl phosphate site.

This sequence belongs to the thiamine-phosphate synthase family. The cofactor is Mg(2+).

It carries out the reaction 2-[(2R,5Z)-2-carboxy-4-methylthiazol-5(2H)-ylidene]ethyl phosphate + 4-amino-2-methyl-5-(diphosphooxymethyl)pyrimidine + 2 H(+) = thiamine phosphate + CO2 + diphosphate. The catalysed reaction is 2-(2-carboxy-4-methylthiazol-5-yl)ethyl phosphate + 4-amino-2-methyl-5-(diphosphooxymethyl)pyrimidine + 2 H(+) = thiamine phosphate + CO2 + diphosphate. The enzyme catalyses 4-methyl-5-(2-phosphooxyethyl)-thiazole + 4-amino-2-methyl-5-(diphosphooxymethyl)pyrimidine + H(+) = thiamine phosphate + diphosphate. It functions in the pathway cofactor biosynthesis; thiamine diphosphate biosynthesis; thiamine phosphate from 4-amino-2-methyl-5-diphosphomethylpyrimidine and 4-methyl-5-(2-phosphoethyl)-thiazole: step 1/1. Functionally, condenses 4-methyl-5-(beta-hydroxyethyl)thiazole monophosphate (THZ-P) and 2-methyl-4-amino-5-hydroxymethyl pyrimidine pyrophosphate (HMP-PP) to form thiamine monophosphate (TMP). This is Thiamine-phosphate synthase from Helicobacter pylori (strain ATCC 700392 / 26695) (Campylobacter pylori).